We begin with the raw amino-acid sequence, 147 residues long: Hemoglobin subunit beta (147 aa).

N-acetylvaline is present on Val-2. Positions 3–147 constitute a Globin domain; that stretch reads HLSGEEKSAV…VANALAHKYH (145 aa). Thr-13 carries the post-translational modification Phosphothreonine. The residue at position 45 (Ser-45) is a Phosphoserine. Lys-60 bears the N6-acetyllysine mark. His-64 lines the heme b pocket. Lys-83 is subject to N6-acetyllysine. His-93 contacts heme b. The residue at position 94 (Cys-94) is an S-nitrosocysteine. Residue Lys-145 is modified to N6-acetyllysine.

It belongs to the globin family. Heterotetramer of two alpha chains and two beta chains. Red blood cells.

In terms of biological role, involved in oxygen transport from the lung to the various peripheral tissues. The chain is Hemoglobin subunit beta (HBB) from Lepus europaeus (European hare).